Here is a 103-residue protein sequence, read N- to C-terminus: MKNMGQMMKQMQKMQKQMMKAQEELKEKTVEATAGGGMVTVVASGDKRILDVRISEDVVDPDDVEMLQDLILAATNEALKKVDELVEQDMGKFTKGLNMPGMF.

Over residues 1–20 (MKNMGQMMKQMQKMQKQMMK) the composition is skewed to low complexity. The disordered stretch occupies residues 1–29 (MKNMGQMMKQMQKMQKQMMKAQEELKEKT).

It belongs to the YbaB/EbfC family. Homodimer.

The protein resides in the cytoplasm. Its subcellular location is the nucleoid. Functionally, binds to DNA and alters its conformation. May be involved in regulation of gene expression, nucleoid organization and DNA protection. The polypeptide is Nucleoid-associated protein BH0035 (Halalkalibacterium halodurans (strain ATCC BAA-125 / DSM 18197 / FERM 7344 / JCM 9153 / C-125) (Bacillus halodurans)).